The primary structure comprises 264 residues: Short chain dehydrogenase/reductase AacuN (264 aa).

4 residues coordinate NADP(+): I24, D70, N97, and R130. Residues S146, S147, and Y161 each act as proton donor in the active site. NADP(+)-binding residues include Y161, K165, and T196. Residue K165 is the Lowers pKa of active site Tyr of the active site.

Belongs to the short-chain dehydrogenases/reductases (SDR) family.

It carries out the reaction 3,8,9,10-tetrahydroxy-6-methyl-1,4-dihydroanthracen-1-one + NADPH + H(+) = (3R)-3,8,9,10-tetrahydroxy-6-methyl-1,2,3,4-tetrahydroanthracen-1-one + NADP(+). It functions in the pathway secondary metabolite biosynthesis. In terms of biological role, atrochrysone carboxylic acid synthase; part of the gene cluster that mediates the biosynthesis of the tetrahydroxanthone dimer secalonic acid D. The pathway begins with the synthesis of atrochrysone thioester by the polyketide synthase AacuL. The atrochrysone carboxyl ACP thioesterase AacuM then breaks the thioester bond and releases the atrochrysone carboxylic acid from AacuL. Atrochrysone carboxylic acid is decarboxylated by the decarboxylase AacuI, and oxidized by the anthrone oxygenase AacuG to yield emodin. Emodin is then reduced to emodin hydroquinone by a yet unidentified oxidoreductase. A-ring reduction by the short chain dehydrogenase AacuN, dehydration by the scytalone dehydratase-like protein AacuK and probable spontaneous re-oxidation, results in overall deoxygenation to chrysophanol. Baeyer-Villiger oxidation by the Baeyer-Villiger monooxygenase (BVMO) AacuH then yields monodictyphenone. Monodictyphenone is transformed into compounds with the tetrahydroxanthone skeleton via methylesterification by the methyltransferase AacuQ, followed by the action of the flavin-dependent monooxygenase AacuC, the isomerase AacuP, and the short chain dehydrogenase/reductase AacuF or AacuD. AacuF and AacuD should accept the same compound as a substrate but perform the ketoreduction with a different stereoselectivity, thus yielding blennolides B and A, respectively. In the final step of the biosynthesis, the cytochrome P450 monooxygenase AacuE accepts blennolide B and/or blennolide A to conduct the dimerization reaction to furnish the tetrahydroxanthone dimers, secalonic acids D, B, and F. This chain is Short chain dehydrogenase/reductase AacuN, found in Aspergillus aculeatus (strain ATCC 16872 / CBS 172.66 / WB 5094).